A 130-amino-acid polypeptide reads, in one-letter code: Small ribosomal subunit protein uS9 (130 aa).

The protein belongs to the universal ribosomal protein uS9 family.

This Verminephrobacter eiseniae (strain EF01-2) protein is Small ribosomal subunit protein uS9.